The sequence spans 158 residues: NAD(P)H-quinone oxidoreductase subunit J, chloroplastic (158 aa).

It belongs to the complex I 30 kDa subunit family. In terms of assembly, NDH is composed of at least 16 different subunits, 5 of which are encoded in the nucleus.

The protein localises to the plastid. It localises to the chloroplast thylakoid membrane. The catalysed reaction is a plastoquinone + NADH + (n+1) H(+)(in) = a plastoquinol + NAD(+) + n H(+)(out). It catalyses the reaction a plastoquinone + NADPH + (n+1) H(+)(in) = a plastoquinol + NADP(+) + n H(+)(out). Its function is as follows. NDH shuttles electrons from NAD(P)H:plastoquinone, via FMN and iron-sulfur (Fe-S) centers, to quinones in the photosynthetic chain and possibly in a chloroplast respiratory chain. The immediate electron acceptor for the enzyme in this species is believed to be plastoquinone. Couples the redox reaction to proton translocation, and thus conserves the redox energy in a proton gradient. In Liriodendron tulipifera (Tuliptree), this protein is NAD(P)H-quinone oxidoreductase subunit J, chloroplastic.